The following is a 374-amino-acid chain: Cell division protein C (374 aa).

The MIT domain occupies A11–E73. G144–T151 serves as a coordination point for ATP.

This sequence belongs to the AAA ATPase family. Interacts with CdvB.

It localises to the cytoplasm. Its subcellular location is the nucleoid. In terms of biological role, part of a cell division machinery. The CdvA, CdvB and CdvC proteins polymerize between segregating nucleoids and persist throughout cell division, forming a successively smaller structure during constriction. The protein is Cell division protein C of Sulfolobus acidocaldarius (strain ATCC 33909 / DSM 639 / JCM 8929 / NBRC 15157 / NCIMB 11770).